Reading from the N-terminus, the 210-residue chain is FMN-dependent NADH:quinone oxidoreductase (210 aa).

Residues 17 to 19 and 148 to 151 each bind FMN; these read SCS and SSGG.

The protein belongs to the azoreductase type 1 family. As to quaternary structure, homodimer. The cofactor is FMN.

It carries out the reaction 2 a quinone + NADH + H(+) = 2 a 1,4-benzosemiquinone + NAD(+). The catalysed reaction is N,N-dimethyl-1,4-phenylenediamine + anthranilate + 2 NAD(+) = 2-(4-dimethylaminophenyl)diazenylbenzoate + 2 NADH + 2 H(+). In terms of biological role, quinone reductase that provides resistance to thiol-specific stress caused by electrophilic quinones. Its function is as follows. Also exhibits azoreductase activity. Catalyzes the reductive cleavage of the azo bond in aromatic azo compounds to the corresponding amines. This is FMN-dependent NADH:quinone oxidoreductase from Geotalea uraniireducens (strain Rf4) (Geobacter uraniireducens).